The primary structure comprises 495 residues: Glucose-6-phosphate 1-dehydrogenase (495 aa).

NADP(+) contacts are provided by residues G11–K18, R45, D84–V85, and K147. Substrate-binding residues include H177, K181, E215, and D234. Catalysis depends on H239, which acts as the Proton acceptor. Substrate-binding residues include K339 and K344.

The protein belongs to the glucose-6-phosphate dehydrogenase family.

The catalysed reaction is D-glucose 6-phosphate + NADP(+) = 6-phospho-D-glucono-1,5-lactone + NADPH + H(+). The protein operates within carbohydrate degradation; pentose phosphate pathway; D-ribulose 5-phosphate from D-glucose 6-phosphate (oxidative stage): step 1/3. Its function is as follows. Catalyzes the oxidation of glucose 6-phosphate to 6-phosphogluconolactone. The polypeptide is Glucose-6-phosphate 1-dehydrogenase (Streptococcus pneumoniae serotype 4 (strain ATCC BAA-334 / TIGR4)).